The primary structure comprises 180 residues: Major urinary protein 17 (180 aa).

A signal peptide spans 1–18 (MKMLLLLCLGLTLVCVHA). Residues cysteine 82 and cysteine 175 are joined by a disulfide bond.

It belongs to the calycin superfamily. Lipocalin family. In terms of tissue distribution, because of their involvement in the coordination of social behavior, Mup proteins are thought to exhibit variable expression depending upon gender, age and status of the studied individuals. Expression may also be strain-specific: in strains C57BL/6J and 129S7, transcriptional support is lacking for Mup17.

It is found in the secreted. Its function is as follows. Major urinary proteins (Mups) bind pheromones, thus stabilize them and allow slow release into the air from urine marks. May protect pheromones from oxidation. May also act as pheromones themselves. In this context, they play a role in the regulation of social behaviors, such as aggression, mating, pup-suckling, territory establishment and dominance. This is Major urinary protein 17 (Mup17) from Mus musculus (Mouse).